The chain runs to 133 residues: Salivary cystatin-L (133 aa).

The N-terminal stretch at 1–19 (MTSSFALVLLLGGVAVCVA) is a signal peptide. Residues 30–117 (ANHQANPEFL…HRTCTTVVFE (88 aa)) enclose the Cystatin domain. Intrachain disulfides connect cysteine 89–cysteine 100 and cysteine 111–cysteine 130.

This sequence belongs to the cystatin family. In terms of assembly, monomer. Can form homodimers in vitro, but probably not in vivo. Homodimers are predicted to be inactive; dimerization disrupts the interaction with target proteases.

The protein localises to the secreted. Inhibitor of cysteine proteinases. Inhibits host immune responses via its inhibition of host cathepsins. Contributes to the suppression of the host's immune response to tick salivary proteins and is important for successful feeding on hosts. Inhibits differentiation of host dendritic cells. Inhibits proliferation of host T-cells in response to antigen stimulus. Down-regulates TLR2-mediated host responses to infection by B.burgdorferi and the production of the chemokine CCL3 by host dendritic cells. Down-regulates host responses to infection by B.burgdorferi and the production of IFNB1 by host dendritic cells. Down-regulates IL1B production by host mast cells, and this then leads to impaired activation of IL1R1, resulting in decreased IL9 production. Inhibits host inflammatory reactions and recruitment of host neutrophils. Inhibits papain and cathepsin L (CTSL) (in vitro). Inhibits cathepsin S (CTSS) (in vitro). Inhibits CTSV and CTSC, but to a lesser degree (in vitro). The polypeptide is Salivary cystatin-L (Ixodes scapularis (Black-legged tick)).